The following is a 310-amino-acid chain: Acetylglutamate kinase (310 aa).

Substrate-binding positions include 79–80 (GG), Arg-101, and Asn-206.

The protein belongs to the acetylglutamate kinase family. ArgB subfamily.

It localises to the cytoplasm. The catalysed reaction is N-acetyl-L-glutamate + ATP = N-acetyl-L-glutamyl 5-phosphate + ADP. The protein operates within amino-acid biosynthesis; L-arginine biosynthesis; N(2)-acetyl-L-ornithine from L-glutamate: step 2/4. Catalyzes the ATP-dependent phosphorylation of N-acetyl-L-glutamate. This Rhodospirillum rubrum (strain ATCC 11170 / ATH 1.1.1 / DSM 467 / LMG 4362 / NCIMB 8255 / S1) protein is Acetylglutamate kinase.